A 37-amino-acid chain; its full sequence is uncharacterized protein (37 aa).

The helical transmembrane segment at 16-36 (FALIVVLFILLIIVGTAFVGG) threads the bilayer.

It belongs to the SscA family.

It is found in the membrane. This is an uncharacterized protein from Bacillus subtilis (strain 168).